A 194-amino-acid chain; its full sequence is Transposon Tn2501 resolvase (194 aa).

The Resolvase/invertase-type recombinase catalytic domain occupies 3-143 (RVFAYCRVST…SGIARAKATG (141 aa)). Serine 11 serves as the catalytic O-(5'-phospho-DNA)-serine intermediate. The segment at residues 170 to 189 (ISAIAREFNTTRQTILRVKA) is a DNA-binding region (H-T-H motif).

This sequence belongs to the site-specific recombinase resolvase family.

Resolvase catalyzes the resolution (a site-specific recombination) of the cointegrated replicon to yield the final transposition products. This chain is Transposon Tn2501 resolvase (tnpR), found in Escherichia coli.